The sequence spans 594 residues: Maternal effect protein oskar (594 aa).

The segment covering 44 to 62 (QQQPKQQQQQQQHQSQHQH) has biased composition (low complexity). The interval 44–68 (QQQPKQQQQQQQHQSQHQHQQQKQK) is disordered. One can recognise an HTH OST-type domain in the interval 174 to 243 (EYPDIDTEIR…SGKRIFNIKP (70 aa)).

In terms of assembly, interacts with smaug (smg). Posterior pole of the oocyte.

Functionally, organizes the germ plasm and directs localization of the posterior determinant nanos. Oskar protein is required to keep oskar RNA and staufen protein at the posterior pole. The polypeptide is Maternal effect protein oskar (osk) (Drosophila virilis (Fruit fly)).